A 148-amino-acid chain; its full sequence is Iron/alpha-ketoglutarate-dependent dioxygenase ausU (148 aa).

Fe cation is bound by residues H45 and D47.

The protein belongs to the PhyH family. Homodimer. Requires Fe cation as cofactor.

It functions in the pathway secondary metabolite biosynthesis; terpenoid biosynthesis. Its function is as follows. Iron/alpha-ketoglutarate-dependent dioxygenase; part of the gene cluster B that mediates the biosynthesis of austinol and dehydroaustinol, two fungal meroterpenoids. The first step of the pathway is the synthesis of 3,5-dimethylorsellinic acid by the polyketide synthase ausA. 3,5-dimethylorsellinic acid is then prenylated by the polyprenyl transferase ausN. Further epoxidation by the FAD-dependent monooxygenase ausM and cyclization by the probable terpene cyclase ausL lead to the formation of protoaustinoid A. Protoaustinoid A is then oxidized to spiro-lactone preaustinoid A3 by the combined action of the FAD-binding monooxygenases ausB and ausC, and the dioxygenase ausE. Acid-catalyzed keto-rearrangement and ring contraction of the tetraketide portion of preaustinoid A3 by ausJ lead to the formation of preaustinoid A4. The aldo-keto reductase ausK, with the help of ausH, is involved in the next step by transforming preaustinoid A4 into isoaustinone which is in turn hydroxylated by the P450 monooxygenase ausI to form austinolide. Finally, the cytochrome P450 monooxygenase ausG modifies austinolide to austinol. Austinol can be further modified to dehydroaustinol which forms a diffusible complex with diorcinol that initiates conidiation. Due to genetic rearrangements of the clusters and the subsequent loss of some enzymes, the end products of the Emericella nidulans austinoid biosynthesis clusters are austinol and dehydroaustinol, even if additional enzymes, such as the O-acetyltransferase ausQ and the cytochrome P450 monooxygenase ausR are still functional. The polypeptide is Iron/alpha-ketoglutarate-dependent dioxygenase ausU (Emericella nidulans (strain FGSC A4 / ATCC 38163 / CBS 112.46 / NRRL 194 / M139) (Aspergillus nidulans)).